Consider the following 353-residue polypeptide: Photosystem II protein D1 (353 aa).

Residue Thr2 is modified to N-acetylthreonine. Thr2 carries the post-translational modification Phosphothreonine. The next 3 helical transmembrane spans lie at 29 to 46, 118 to 133, and 142 to 156; these read YIGW…TATS, HFLL…EWEL, and WIAV…AATA. His118 provides a ligand contact to chlorophyll a. Tyr126 is a pheophytin a binding site. [CaMn4O5] cluster-binding residues include Asp170 and Glu189. A helical transmembrane segment spans residues 197 to 218; sequence FHMLGVAGVFGGSLFSAMHGSL. His198 contacts chlorophyll a. A quinone-binding positions include His215 and 264–265; that span reads SF. Position 215 (His215) interacts with Fe cation. His272 is a binding site for Fe cation. The helical transmembrane segment at 274-288 threads the bilayer; the sequence is FLAAWPVVGIWFTAL. Residues His332, Glu333, Asp342, and Ala344 each contribute to the [CaMn4O5] cluster site. Residues 345–353 constitute a propeptide that is removed on maturation; that stretch reads AIEAPSTNG.

It belongs to the reaction center PufL/M/PsbA/D family. As to quaternary structure, PSII is composed of 1 copy each of membrane proteins PsbA, PsbB, PsbC, PsbD, PsbE, PsbF, PsbH, PsbI, PsbJ, PsbK, PsbL, PsbM, PsbT, PsbX, PsbY, PsbZ, Psb30/Ycf12, at least 3 peripheral proteins of the oxygen-evolving complex and a large number of cofactors. It forms dimeric complexes. The D1/D2 heterodimer binds P680, chlorophylls that are the primary electron donor of PSII, and subsequent electron acceptors. It shares a non-heme iron and each subunit binds pheophytin, quinone, additional chlorophylls, carotenoids and lipids. D1 provides most of the ligands for the Mn4-Ca-O5 cluster of the oxygen-evolving complex (OEC). There is also a Cl(-1) ion associated with D1 and D2, which is required for oxygen evolution. The PSII complex binds additional chlorophylls, carotenoids and specific lipids. is required as a cofactor. In terms of processing, tyr-161 forms a radical intermediate that is referred to as redox-active TyrZ, YZ or Y-Z. C-terminally processed by CTPA; processing is essential to allow assembly of the oxygen-evolving complex and thus photosynthetic growth.

It localises to the plastid. Its subcellular location is the chloroplast thylakoid membrane. It catalyses the reaction 2 a plastoquinone + 4 hnu + 2 H2O = 2 a plastoquinol + O2. Its function is as follows. Photosystem II (PSII) is a light-driven water:plastoquinone oxidoreductase that uses light energy to abstract electrons from H(2)O, generating O(2) and a proton gradient subsequently used for ATP formation. It consists of a core antenna complex that captures photons, and an electron transfer chain that converts photonic excitation into a charge separation. The D1/D2 (PsbA/PsbD) reaction center heterodimer binds P680, the primary electron donor of PSII as well as several subsequent electron acceptors. This chain is Photosystem II protein D1, found in Gossypium barbadense (Sea Island cotton).